Consider the following 477-residue polypeptide: Epoxyalcohol synthase CYP5164B1 (477 aa).

Heme is bound at residue Cys-421.

It belongs to the cytochrome P450 family. Requires heme as cofactor.

It carries out the reaction (9S)-hydroperoxy-(10E,12Z)-octadecadienoate = (11S)-hydroxy-(9S,10S)-epoxy-(12Z)-octadecenoate. It catalyses the reaction (13S)-hydroperoxy-(9Z,11E)-octadecadienoate = 11-hydroxy-12,13-epoxy-(9Z)-octadecenoate. It functions in the pathway lipid metabolism; oxylipin biosynthesis. Cytochrome P450 epoxyalcohol synthase involved in the metabolism of oxylipins 'ectocarpins' natural products, such as hybridalactone, ecklonilactones and derivatives. Isomerizes the hydroperoxides into epoxyalcohols via epoxyallylic radical. Can use linoleic acid 9-hydroperoxide ((9S,10E,12Z)-9-hydroperoxy-10,12-octadecadienoic, 9-HPOD) as preferred substrate to produce (9S,10S,11S,12Z)-9,10-epoxy-11-hydroxy-12-octadecenoic acid and, to a lower extent, active with linoleate 13-hydroperoxide ((9Z,11E,13S)-13-hydroperoxy-9,11-octadecadienoic, 13-HPOD) to produce 11-hydroxy-12,13-epoxy-9-octadecenoic acid. No activity toward alpha-linolenic acid 9- and 13-hydroperoxides, and toward eicosapentaenoic acid 15-hydroperoxide. The polypeptide is Epoxyalcohol synthase CYP5164B1 (Ectocarpus siliculosus (Brown alga)).